The primary structure comprises 307 residues: MTTGLSTAGAQDIGRSSVRPYLEECTRRFQEMFDRHVVTRPTKVELTDAELREVIDDCNAAVAPLGKTVSDERWISYVGVVLWSQSPRHIKDMEAFKAVCVLNCVTFVWDDMDPALHDFGLFLPQLRKICEKYYGPEDAEVAYEAARAFVTSDHMFRDSPIKAALCTTSPEQYFRFRVTDIGVDFWMKMSYPIYRHPEFTEHAKTSLAARMTTRGLTIVNDFYSYDREVSLGQITNCFRLCDVSDETAFKEFFQARLDDMIEDIECIKAFDQLTQDVFLDLIYGNFVWTTSNKRYKTAVNDVNSRIQ.

Mg(2+) contacts are provided by Asp110, Asn220, Ser224, and Glu228. A DDXXD motif; degenerate motif is present at residues 110 to 113; it reads DDMD. Positions 220-228 match the NSE/DTE motif motif; that stretch reads NDFYSYDRE.

The protein belongs to the terpene synthase family. As to quaternary structure, homodimer. The cofactor is Mg(2+).

It carries out the reaction geranylgeranyl diphosphate + H2O = cyclooctat-9-en-7-ol + diphosphate. Functionally, catalyzes the cyclization of the linear isoprenoid intermediate geranylgeranyl diphosphate to tricycclic cyclooctat-9-en-7-ol in the cyclooctatin biosynthesis pathway. Cyclooctatin is a potent inhibitor of lysophospholipase. This chain is Cyclooctat-9-en-7-ol synthase, found in Streptomyces melanosporofaciens.